Consider the following 361-residue polypeptide: Large ribosomal subunit protein mL45 (361 aa).

Residues 319-361 form a disordered region; the sequence is EPPKELSAGDAEVKQVDSVGEQSKEQLPLATPVESHTKPSLAI.

The protein belongs to the mitochondrion-specific ribosomal protein mL45 family.

Its subcellular location is the mitochondrion. In Drosophila melanogaster (Fruit fly), this protein is Large ribosomal subunit protein mL45 (mRpL45).